A 627-amino-acid polypeptide reads, in one-letter code: Transducer protein MpcT (627 aa).

Helical transmembrane passes span 28 to 48 and 55 to 75; these read MLTAVGLQFLAAGGMAFLTVF and LIGVGGMLALSVVAFYNTYLI. HAMP domains lie at 78–132 and 192–247; these read ADFV…VASR and EQLR…DTIS. The Methyl-accepting transducer domain occupies 266 to 502; sequence RVDAVADRSA…DVVGMVEEVA (237 aa). 3 positions are modified to glutamate methyl ester (Glu): glutamate 310, glutamate 416, and glutamate 507. Disordered stretches follow at residues 505-527 and 557-627; these read SEETAAESDTVADNAAEQTDATD and GTAD…ADSQ. Residues 580-590 are compositionally biased toward low complexity; sequence AAAVVDQPQPA.

It belongs to the methyl-accepting chemotaxis (MCP) protein family. As to quaternary structure, interacts with CheA, CheY and CheW1. Post-translationally, methylated by CheR.

Its subcellular location is the cell membrane. In terms of biological role, mediates bacteriorhodopsin- and halorhodopsin-dependent photoresponses by detecting membrane potential changes. Probably transduces the signal to the histidine kinase CheA. This Halobacterium salinarum (strain ATCC 29341 / DSM 671 / R1) protein is Transducer protein MpcT (mpcT).